The chain runs to 279 residues: Undecaprenyl-diphosphatase (279 aa).

8 helical membrane passes run Leu-2–Leu-22, Ala-44–Ile-64, Trp-85–Leu-105, Phe-113–Ile-133, Val-163–Leu-183, Thr-188–Leu-208, Leu-225–Leu-245, and Phe-255–Phe-275.

Belongs to the UppP family.

It localises to the cell membrane. The catalysed reaction is di-trans,octa-cis-undecaprenyl diphosphate + H2O = di-trans,octa-cis-undecaprenyl phosphate + phosphate + H(+). Its function is as follows. Catalyzes the dephosphorylation of undecaprenyl diphosphate (UPP). Confers resistance to bacitracin. This Streptococcus equi subsp. zooepidemicus (strain H70) protein is Undecaprenyl-diphosphatase.